The following is a 132-amino-acid chain: Large ribosomal subunit protein uL14 (132 aa).

It belongs to the universal ribosomal protein uL14 family. In terms of assembly, part of the 50S ribosomal subunit. Forms a cluster with proteins L3 and L24e, part of which may contact the 16S rRNA in 2 intersubunit bridges.

Functionally, binds to 23S rRNA. Forms part of two intersubunit bridges in the 70S ribosome. The polypeptide is Large ribosomal subunit protein uL14 (Archaeoglobus fulgidus (strain ATCC 49558 / DSM 4304 / JCM 9628 / NBRC 100126 / VC-16)).